Reading from the N-terminus, the 521-residue chain is Cyclic AMP-responsive element-binding protein 3-like protein 2 (521 aa).

Residues 1 to 378 (MEVLESGEQS…CKLAGTQTGT (378 aa)) are Cytoplasmic-facing. Polar residues predominate over residues 83 to 103 (YSLSEEPRTQSPFTHAATSDS). The disordered stretch occupies residues 83–106 (YSLSEEPRTQSPFTHAATSDSFND). Phosphoserine is present on S93. Residue K178 forms a Glycyl lysine isopeptide (Lys-Gly) (interchain with G-Cter in SUMO2) linkage. S191 carries the phosphoserine modification. The segment at 196 to 264 (SVDQLHLPPT…PHKLQGSGPL (69 aa)) is disordered. A compositionally biased stretch (low complexity) spans 208 to 220 (SSHSSDSEGSLSP). One can recognise a bZIP domain in the interval 294-357 (ALKKIRRKIK…RTLLQQLQKL (64 aa)). Residues 296–325 (KKIRRKIKNKISAQESRRKKKEYMDSLEKK) are basic motif. Positions 336-357 (LRKKVEVLENTNRTLLQQLQKL) are leucine-zipper. The chain crosses the membrane as a helical; Signal-anchor for type II membrane protein span at residues 379–399 (CLMVVVLCFAVAFGSFFQGYG). The Lumenal segment spans residues 400 to 521 (PYPSATKMAL…ELERRVNATF (122 aa)). The short motif at 427–430 (RNLL) is the S1P recognition element. N481, N505, and N518 each carry an N-linked (GlcNAc...) asparagine glycan.

It belongs to the bZIP family. ATF subfamily. In terms of assembly, binds DNA as a dimer. Upon ER stress, translocated to the Golgi apparatus, where it is processed by regulated intramembrane proteolysis (RIP) to release the cytosol-facing N-terminal transcription factor domain. The cleavage is performed sequentially by site-1 and site-2 proteases (S1P/MBTPS1 and S2P/MBTPS2). Post-translationally, N-glycosylated. In terms of processing, ubiquitinated by HRD1/SYVN1; undergoes 'Lys-48'-linked ubiquitination, followed by rapid proteasomal degradation under normal conditions. Upon ER stress, SYVN1 E3 ubiquitin-protein ligase dissociates from its substrate, ubiquitination does not occur and CREB3L2 is stabilized. As to expression, widely expressed, including in lung, bladder, ovary, testis and spleen. Highly expressed in chondrocytes.

It localises to the endoplasmic reticulum membrane. The protein resides in the nucleus. Its function is as follows. Transcription factor involved in unfolded protein response (UPR). In the absence of endoplasmic reticulum (ER) stress, inserted into ER membranes, with N-terminal DNA-binding and transcription activation domains oriented toward the cytosolic face of the membrane. In response to ER stress, transported to the Golgi, where it is cleaved in a site-specific manner by resident proteases S1P/MBTPS1 and S2P/MBTPS2. The released N-terminal cytosolic domain is translocated to the nucleus to effect transcription of specific target genes. Plays a critical role in chondrogenesis by activating the transcription of SEC23A, which promotes the transport and secretion of cartilage matrix proteins, and possibly that of ER biogenesis-related genes. In a neuroblastoma cell line, protects cells from ER stress-induced death. In vitro activates transcription of target genes via direct binding to the CRE site. The sequence is that of Cyclic AMP-responsive element-binding protein 3-like protein 2 (Creb3l2) from Mus musculus (Mouse).